The following is a 147-amino-acid chain: Small ribosomal subunit protein bS6 (147 aa).

Positions 103-147 are disordered; that stretch reads AARMAANLPSFPEDEDTEEKGSAPLAREEEGIGEEAQTDEAEDKE. The span at 133–147 shows a compositional bias: acidic residues; that stretch reads GIGEEAQTDEAEDKE.

Belongs to the bacterial ribosomal protein bS6 family.

Its function is as follows. Binds together with bS18 to 16S ribosomal RNA. The protein is Small ribosomal subunit protein bS6 of Syntrophobacter fumaroxidans (strain DSM 10017 / MPOB).